A 128-amino-acid polypeptide reads, in one-letter code: 3-aminoacrylate deaminase RutC (128 aa).

The protein belongs to the RutC family. As to quaternary structure, homotrimer.

It catalyses the reaction (Z)-3-aminoacrylate + H2O + H(+) = 3-oxopropanoate + NH4(+). Functionally, involved in pyrimidine catabolism. Catalyzes the deamination of 3-aminoacrylate to malonic semialdehyde, a reaction that can also occur spontaneously. RutC may facilitate the reaction and modulate the metabolic fitness, rather than catalyzing essential functions. This chain is 3-aminoacrylate deaminase RutC, found in Escherichia coli (strain SE11).